A 105-amino-acid polypeptide reads, in one-letter code: Heat shock protein HspQ (105 aa).

Positions 75 to 105 (GEMQEEHPEQPSMDELARSIRQQLQAPRLRN) are disordered.

Belongs to the HspQ family.

It is found in the cytoplasm. Its function is as follows. Involved in the degradation of certain denaturated proteins, including DnaA, during heat shock stress. This Cronobacter sakazakii (strain ATCC BAA-894) (Enterobacter sakazakii) protein is Heat shock protein HspQ.